A 1045-amino-acid chain; its full sequence is Unconventional myosin-Ia (1045 aa).

The region spanning 11-697 (AAVGDLVMLD…TLFDLEKRRQ (687 aa)) is the Myosin motor domain. 104–111 (GESGAGKT) provides a ligand contact to ATP. The tract at residues 574–596 (VATLMKNLYSKNPNYIRCIKPND) is actin-binding. IQ domains lie at 701 to 727 (AELA…RKSQ), 723 to 750 (MRKS…KRSV), and 746 to 774 (MKRS…RSDA). Residues 861–1044 (KALYAQSLQQ…RGSHKMEILV (184 aa)) form the TH1 domain.

It belongs to the TRAFAC class myosin-kinesin ATPase superfamily. Myosin family. In terms of tissue distribution, intestine.

Functionally, could play an important role in morphogenesis and function of intestinal microvilli. The sequence is that of Unconventional myosin-Ia (MYO1A) from Gallus gallus (Chicken).